A 673-amino-acid polypeptide reads, in one-letter code: MDHSCTRFIHRRGPPTRTRAGFKRGKRPRIQQRPRARVSGTIPASRLHPAPASQPGPCPAPGHCPVGPAHERPMGSSQEEGLRCQPSQPDHDADGHCGPDLEGAERASATPGPPGLLNSHRPADSDDTNAAGPSAALLEGLLLGGGKPSPHSTRPGPFFYIGGSNGATIISSYCKSKGWQRIHDSRRDDYTLKWCEVKSRDSYGSFREGEQLLYQLPNNKLLTTKIGLLSTLRGRARAMSKASKVPGGVQARLEKDAAAPALEDLPWTSPGYLRPQRVLRMEEFFPETYRLDLKHEREAFFTLFDETQIWICKPTASNQGKGIFLLRNQEEVAALQAKTRSMEDDPIHHKTPFRGPQARVVQRYIQNPLLVDGRKFDVRSYLLIACTTPYMIFFGHGYARLTLSLYDPHSSDLGGHLTNQFMQKKSPLYMLLKEHTVWSMEHLNRYISDTFWKARGLAKDWVFTTLKKRMQQIMAHCFLAAKPKLDCKLGYFDLIGCDFLIDDNFKVWLLEMNSNPALHTNCEVLKEVIPGVVIETLDLVLETFRKSLRGQKMLPLLSQRRFVLLHNGEADPRPHLGGSCSLRRWPPLPTRQAKSSGPPMPHAPDQPGARRPAPPPLVPQRPRPPGPDLDSAHDGEPQAPGTEQSGTGNRHPAQEPSPGTAKEEREEPENARP.

Residues 1–132 (MDHSCTRFIH…ADSDDTNAAG (132 aa)) are disordered. Residues 8-36 (FIHRRGPPTRTRAGFKRGKRPRIQQRPRA) are compositionally biased toward basic residues. The span at 52–62 (ASQPGPCPAPG) shows a compositional bias: pro residues. Residues 89 to 105 (PDHDADGHCGPDLEGAE) are compositionally biased toward basic and acidic residues. One can recognise a TTL domain in the interval 155-552 (PGPFFYIGGS…TFRKSLRGQK (398 aa)). ATP is bound by residues 362–365 (QRYI), Lys375, and Asp377. The tract at residues 569-673 (EADPRPHLGG…EREEPENARP (105 aa)) is disordered. Residues 612 to 627 (PAPPPLVPQRPRPPGP) show a composition bias toward pro residues. Basic and acidic residues predominate over residues 661-673 (AKEEREEPENARP).

Functionally, inactive polyglycylase. The protein is Inactive polyglycylase TTLL10 of Homo sapiens (Human).